We begin with the raw amino-acid sequence, 142 residues long: Large ribosomal subunit protein uL11 (142 aa).

It belongs to the universal ribosomal protein uL11 family. Part of the ribosomal stalk of the 50S ribosomal subunit. Interacts with L10 and the large rRNA to form the base of the stalk. L10 forms an elongated spine to which L12 dimers bind in a sequential fashion forming a multimeric L10(L12)X complex. Post-translationally, one or more lysine residues are methylated.

Functionally, forms part of the ribosomal stalk which helps the ribosome interact with GTP-bound translation factors. The sequence is that of Large ribosomal subunit protein uL11 from Ruthia magnifica subsp. Calyptogena magnifica.